Consider the following 1342-residue polypeptide: DNA-directed RNA polymerase subunit beta (1342 aa).

It belongs to the RNA polymerase beta chain family. As to quaternary structure, the RNAP catalytic core consists of 2 alpha, 1 beta, 1 beta' and 1 omega subunit. When a sigma factor is associated with the core the holoenzyme is formed, which can initiate transcription.

It catalyses the reaction RNA(n) + a ribonucleoside 5'-triphosphate = RNA(n+1) + diphosphate. Its function is as follows. DNA-dependent RNA polymerase catalyzes the transcription of DNA into RNA using the four ribonucleoside triphosphates as substrates. The chain is DNA-directed RNA polymerase subunit beta from Vibrio campbellii (strain ATCC BAA-1116).